The chain runs to 1082 residues: Importin-4 (1082 aa).

M1 is subject to N-acetylmethionine. The 67-residue stretch at A24 to K90 folds into the Importin N-terminal domain. HEAT repeat units lie at residues K348–D385, R390–P427, S431–P471, P475–D513, Q896–C933, and D937–V975.

Belongs to the importin beta family. In terms of assembly, found in a cytosolic complex with ASF1 (ASF1A or ASF1B) and histones H3 and H4.

Its subcellular location is the cytoplasm. The protein localises to the nucleus. Functionally, nuclear transport receptor that mediates nuclear import of proteins, such as histones, RPS3A, TNP2 and VDR. Serves as receptor for nuclear localization signals (NLS) in cargo substrates. Is thought to mediate docking of the importin/substrate complex to the nuclear pore complex (NPC) through binding to nucleoporin and the complex is subsequently translocated through the pore by an energy requiring, Ran-dependent mechanism. At the nucleoplasmic side of the NPC, Ran binds to the importin, the importin/substrate complex dissociates and importin is re-exported from the nucleus to the cytoplasm where GTP hydrolysis releases Ran. The directionality of nuclear import is thought to be conferred by an asymmetric distribution of the GTP- and GDP-bound forms of Ran between the cytoplasm and nucleus. Mediates the nuclear import of the histone H3-H4 dimer when in complex with ASF1 (ASF1A or ASF1B). Mediates the ligand-independent nuclear import of vitamin D receptor (VDR). This is Importin-4 (Ipo4) from Mus musculus (Mouse).